A 279-amino-acid polypeptide reads, in one-letter code: MVDHLANTEINSQRIAAVESCFGASGQPLALPGRVLLGEGVLTKECRKKAKPRIFFLFNDILVYGSIVLSKRKYRSQHIIPLEEVTLEPLPETLQAKNRWMIKTAKKSFVVSAASTTERQEWISHIEECVRRQLLATGRQPTTEHAAPWIPDKATDICMRCTQTRFSALTRRHHCRKCGFVVCAECSRERFLLPRLSPKPLRVCSLCYRELAAQKLREEAREGIGGSPPQLSHLGGTVCGASSGDDDDSDEDREGNGDGDWPTQVEFYASGVSWSAFHS.

One can recognise a PH domain in the interval 35-131; that stretch reads VLLGEGVLTK…WISHIEECVR (97 aa). The segment at 152 to 212 adopts an FYVE-type zinc-finger fold; the sequence is DKATDICMRC…VCSLCYRELA (61 aa). The Zn(2+) site is built by Cys158, Cys161, Cys175, Cys178, Cys183, Cys186, Cys204, and Cys207. Positions 220–263 are disordered; the sequence is AREGIGGSPPQLSHLGGTVCGASSGDDDDSDEDREGNGDGDWPT. The span at 244–253 shows a compositional bias: acidic residues; it reads GDDDDSDEDR.

As to expression, widely expressed.

The protein resides in the nucleus. It is found in the cytoplasm. It localises to the perinuclear region. The protein localises to the lysosome. May induce apoptosis through the lysosomal-mitochondrial pathway. Translocates to the lysosome initiating the permeabilization of lysosomal membrane (LMP) and resulting in the release of CTSD and CTSL to the cytoplasm. Triggers the caspase-independent apoptosis by altering mitochondrial membrane permeabilization (MMP) resulting in the release of PDCD8. In Mus musculus (Mouse), this protein is Pleckstrin homology domain-containing family F member 1 (Plekhf1).